The following is a 302-amino-acid chain: Sulfate adenylyltransferase subunit 2 (302 aa).

It belongs to the PAPS reductase family. CysD subfamily. Heterodimer composed of CysD, the smaller subunit, and CysN.

It catalyses the reaction sulfate + ATP + H(+) = adenosine 5'-phosphosulfate + diphosphate. The protein operates within sulfur metabolism; hydrogen sulfide biosynthesis; sulfite from sulfate: step 1/3. Its function is as follows. With CysN forms the ATP sulfurylase (ATPS) that catalyzes the adenylation of sulfate producing adenosine 5'-phosphosulfate (APS) and diphosphate, the first enzymatic step in sulfur assimilation pathway. APS synthesis involves the formation of a high-energy phosphoric-sulfuric acid anhydride bond driven by GTP hydrolysis by CysN coupled to ATP hydrolysis by CysD. The chain is Sulfate adenylyltransferase subunit 2 from Citrobacter koseri (strain ATCC BAA-895 / CDC 4225-83 / SGSC4696).